The chain runs to 345 residues: D-erythrose-4-phosphate dehydrogenase (345 aa).

NAD(+) is bound at residue 11–12; sequence RI. Substrate-binding positions include 158–160, arginine 204, 217–218, and arginine 240; these read SCT and TK. Cysteine 159 (nucleophile) is an active-site residue. Asparagine 322 provides a ligand contact to NAD(+).

It belongs to the glyceraldehyde-3-phosphate dehydrogenase family. Epd subfamily. Homotetramer.

It localises to the cytoplasm. It carries out the reaction D-erythrose 4-phosphate + NAD(+) + H2O = 4-phospho-D-erythronate + NADH + 2 H(+). It participates in cofactor biosynthesis; pyridoxine 5'-phosphate biosynthesis; pyridoxine 5'-phosphate from D-erythrose 4-phosphate: step 1/5. Functionally, catalyzes the NAD-dependent conversion of D-erythrose 4-phosphate to 4-phosphoerythronate. In Vibrio campbellii (strain ATCC BAA-1116), this protein is D-erythrose-4-phosphate dehydrogenase.